We begin with the raw amino-acid sequence, 1432 residues long: uncharacterized protein (1432 aa).

Disordered stretches follow at residues 1–72, 208–237, 280–335, 531–607, 690–712, 738–801, 896–950, 1044–1076, and 1303–1359; these read MDTI…NYYN, NKIE…NNGQ, ERNE…ENNL, IVKS…NNSS, QNKS…TTTT, NNTL…NGGR, QSNN…SPPT, NINS…NNNN, and NNNN…NTTP. 3 stretches are compositionally biased toward low complexity: residues 14–72, 208–225, and 284–300; these read INNN…NYYN, NKIE…NNEN, and LTSP…LPSS. A compositionally biased stretch (acidic residues) spans 315-325; it reads QEEEEEEEEED. Low complexity-rich tracts occupy residues 536-575, 583-607, 691-712, 744-779, and 896-944; these read SSSN…NKNK, DNNT…NNSS, NKSP…TTTT, NMNN…NSNN, and QSNN…SSSN. Residues 1311–1320 show a composition bias toward gly residues; sequence NGNGNGGING. Over residues 1321-1333 the composition is skewed to low complexity; the sequence is NNGNNSGSNNKEN. A compositionally biased stretch (gly residues) spans 1334–1346; that stretch reads GGTGAGIGGGGGL. Low complexity predominate over residues 1347–1359; it reads QLPNNNNNNNTTP.

This is an uncharacterized protein from Dictyostelium discoideum (Social amoeba).